The sequence spans 473 residues: GTPase Der (473 aa).

EngA-type G domains are found at residues 3-167 (FTVA…GKDR) and 203-378 (LRVA…RVWN). GTP is bound by residues 9–16 (GRPNVGKS), 56–60 (DTAGL), 119–122 (NKSE), 209–216 (GRPNAGKS), 256–260 (DTAGM), and 321–324 (NKWD). The KH-like domain occupies 379–463 (KRISTARLNR…PIRIHFRSAE (85 aa)).

It belongs to the TRAFAC class TrmE-Era-EngA-EngB-Septin-like GTPase superfamily. EngA (Der) GTPase family. As to quaternary structure, associates with the 50S ribosomal subunit.

GTPase that plays an essential role in the late steps of ribosome biogenesis. This chain is GTPase Der, found in Rhizobium etli (strain CIAT 652).